The primary structure comprises 152 residues: Ubiquitin-activating enzyme E1 Y (152 aa).

C51 acts as the Glycyl thioester intermediate in catalysis.

The protein belongs to the ubiquitin-activating E1 family. In terms of assembly, monomer.

It carries out the reaction ATP + ubiquitin + [E1 ubiquitin-activating enzyme]-L-cysteine = AMP + diphosphate + S-ubiquitinyl-[E1 ubiquitin-activating enzyme]-L-cysteine.. The protein operates within protein modification; protein ubiquitination. In terms of biological role, activates ubiquitin by first adenylating its C-terminal glycine residue with ATP, and thereafter linking this residue to the side chain of a cysteine residue in E1, yielding a ubiquitin-E1 thioester and free AMP. The Y chromosome form could be involved in the survival and proliferation of differentiating spermatogonia. The chain is Ubiquitin-activating enzyme E1 Y (UBE1Y) from Osphranter rufus (Red kangaroo).